The primary structure comprises 860 residues: Leucine--tRNA ligase (860 aa).

The 'HIGH' region motif lies at 42-52 (PYPSGRLHMGH). Positions 619–623 (KMSKS) match the 'KMSKS' region motif. Position 622 (Lys622) interacts with ATP.

It belongs to the class-I aminoacyl-tRNA synthetase family.

It is found in the cytoplasm. The catalysed reaction is tRNA(Leu) + L-leucine + ATP = L-leucyl-tRNA(Leu) + AMP + diphosphate. This is Leucine--tRNA ligase from Escherichia coli (strain 55989 / EAEC).